Reading from the N-terminus, the 227-residue chain is 2-C-methyl-D-erythritol 4-phosphate cytidylyltransferase (227 aa).

Belongs to the IspD/TarI cytidylyltransferase family. IspD subfamily.

It carries out the reaction 2-C-methyl-D-erythritol 4-phosphate + CTP + H(+) = 4-CDP-2-C-methyl-D-erythritol + diphosphate. Its pathway is isoprenoid biosynthesis; isopentenyl diphosphate biosynthesis via DXP pathway; isopentenyl diphosphate from 1-deoxy-D-xylulose 5-phosphate: step 2/6. Catalyzes the formation of 4-diphosphocytidyl-2-C-methyl-D-erythritol from CTP and 2-C-methyl-D-erythritol 4-phosphate (MEP). This Dehalococcoides mccartyi (strain ATCC BAA-2266 / KCTC 15142 / 195) (Dehalococcoides ethenogenes (strain 195)) protein is 2-C-methyl-D-erythritol 4-phosphate cytidylyltransferase.